A 264-amino-acid chain; its full sequence is Glutamate racemase (264 aa).

Substrate is bound by residues 10–11 and 42–43; these read DS and YG. Cys-73 serves as the catalytic Proton donor/acceptor. 74-75 is a binding site for substrate; it reads NT. Cys-183 acts as the Proton donor/acceptor in catalysis. 184 to 185 contacts substrate; the sequence is TH.

Belongs to the aspartate/glutamate racemases family.

It catalyses the reaction L-glutamate = D-glutamate. The protein operates within cell wall biogenesis; peptidoglycan biosynthesis. Functionally, provides the (R)-glutamate required for cell wall biosynthesis. The chain is Glutamate racemase from Streptococcus agalactiae serotype III (strain NEM316).